A 145-amino-acid chain; its full sequence is 3-hydroxyacyl-[acyl-carrier-protein] dehydratase FabZ (145 aa).

Histidine 48 is an active-site residue.

This sequence belongs to the thioester dehydratase family. FabZ subfamily.

The protein localises to the cytoplasm. The catalysed reaction is a (3R)-hydroxyacyl-[ACP] = a (2E)-enoyl-[ACP] + H2O. Involved in unsaturated fatty acids biosynthesis. Catalyzes the dehydration of short chain beta-hydroxyacyl-ACPs and long chain saturated and unsaturated beta-hydroxyacyl-ACPs. The chain is 3-hydroxyacyl-[acyl-carrier-protein] dehydratase FabZ from Campylobacter hominis (strain ATCC BAA-381 / DSM 21671 / CCUG 45161 / LMG 19568 / NCTC 13146 / CH001A).